The following is a 146-amino-acid chain: Cystatin-C (146 aa).

The N-terminal stretch at Met-1 to Gly-26 is a signal peptide. Ser-43 is subject to Phosphoserine. The short motif at Gln-81–Gly-85 is the Secondary area of contact element. 2 disulfides stabilise this stretch: Cys-99–Cys-109 and Cys-123–Cys-143.

It belongs to the cystatin family.

It is found in the secreted. As an inhibitor of cysteine proteinases, this protein is thought to serve an important physiological role as a local regulator of this enzyme activity. This chain is Cystatin-C (CST3), found in Macaca mulatta (Rhesus macaque).